A 95-amino-acid chain; its full sequence is Aspartyl/glutamyl-tRNA(Asn/Gln) amidotransferase subunit C (95 aa).

Belongs to the GatC family. Heterotrimer of A, B and C subunits.

It catalyses the reaction L-glutamyl-tRNA(Gln) + L-glutamine + ATP + H2O = L-glutaminyl-tRNA(Gln) + L-glutamate + ADP + phosphate + H(+). The catalysed reaction is L-aspartyl-tRNA(Asn) + L-glutamine + ATP + H2O = L-asparaginyl-tRNA(Asn) + L-glutamate + ADP + phosphate + 2 H(+). In terms of biological role, allows the formation of correctly charged Asn-tRNA(Asn) or Gln-tRNA(Gln) through the transamidation of misacylated Asp-tRNA(Asn) or Glu-tRNA(Gln) in organisms which lack either or both of asparaginyl-tRNA or glutaminyl-tRNA synthetases. The reaction takes place in the presence of glutamine and ATP through an activated phospho-Asp-tRNA(Asn) or phospho-Glu-tRNA(Gln). This Clostridium botulinum (strain 657 / Type Ba4) protein is Aspartyl/glutamyl-tRNA(Asn/Gln) amidotransferase subunit C.